Consider the following 234-residue polypeptide: Exotoxin type G (234 aa).

The signal sequence occupies residues 1–24; that stretch reads MKTNILTIIILSCVFSYGSQLAYA.

It belongs to the staphylococcal/streptococcal toxin family.

Functionally, mitogenic for human peripheral blood lymphocytes. The sequence is that of Exotoxin type G (speG) from Streptococcus pyogenes serotype M3 (strain ATCC BAA-595 / MGAS315).